A 75-amino-acid chain; its full sequence is DNA-directed RNA polymerase subunit Rpo5 (75 aa).

Belongs to the archaeal Rpo5/eukaryotic RPB5 RNA polymerase subunit family. As to quaternary structure, part of the RNA polymerase complex.

The protein localises to the cytoplasm. It carries out the reaction RNA(n) + a ribonucleoside 5'-triphosphate = RNA(n+1) + diphosphate. Functionally, DNA-dependent RNA polymerase (RNAP) catalyzes the transcription of DNA into RNA using the four ribonucleoside triphosphates as substrates. The sequence is that of DNA-directed RNA polymerase subunit Rpo5 from Halobacterium salinarum (strain ATCC 700922 / JCM 11081 / NRC-1) (Halobacterium halobium).